The sequence spans 266 residues: Type III pantothenate kinase (266 aa).

ATP is bound at residue 6–13; it reads DIGNSRIK. Residues Tyr94 and 101 to 104 contribute to the substrate site; that span reads GIDR. Asp103 (proton acceptor) is an active-site residue. Position 128 (Asp128) interacts with K(+). Thr131 provides a ligand contact to ATP. Thr183 is a binding site for substrate.

The protein belongs to the type III pantothenate kinase family. Homodimer. NH4(+) is required as a cofactor. The cofactor is K(+).

The protein localises to the cytoplasm. The enzyme catalyses (R)-pantothenate + ATP = (R)-4'-phosphopantothenate + ADP + H(+). The protein operates within cofactor biosynthesis; coenzyme A biosynthesis; CoA from (R)-pantothenate: step 1/5. In terms of biological role, catalyzes the phosphorylation of pantothenate (Pan), the first step in CoA biosynthesis. This is Type III pantothenate kinase from Nitrosococcus oceani (strain ATCC 19707 / BCRC 17464 / JCM 30415 / NCIMB 11848 / C-107).